The sequence spans 359 residues: NADPH HC-toxin reductase 2 (359 aa).

NADP(+)-binding positions include arginine 39, 67-68 (DL), 87-89 (VAT), tyrosine 177, lysine 181, 206-209 (LGLV), and threonine 221. The Proton donor role is filled by lysine 181.

This sequence belongs to the NAD(P)-dependent epimerase/dehydratase family.

Its function is as follows. In tandem with Hm1, NADPH-dependent HC toxin reductase (HCTR), which inactivates HC toxin, a cyclic tetrapeptide produced by the fungus Cochliobolus carbonum to permit infection and acting as an inhibitor of host histone deacetylases (HDACs), thus conferring resistance against C.carbonum race 1 in resistant cultivars (e.g. cv. B73 and cv. Wisconsin 22). Catalyzes the production of 8-hydroxy derivative of HC-toxin via the reduction of the 8-keto group of 2-amino-9,10-epoxy-8-oxo-decanoic acid, an amino acid of the HC-toxin. In Zea mays (Maize), this protein is NADPH HC-toxin reductase 2.